The primary structure comprises 405 residues: Pentatricopeptide repeat-containing protein At1g11630, mitochondrial (405 aa).

The N-terminal 72 residues, 1–72 (MAFLFRIRTS…RSTSLSPDYH (72 aa)), are a transit peptide targeting the mitochondrion. PPR repeat units lie at residues 74-108 (DRIIFSVAVVTLAREKHFVAVSQLLDGFIQNQPDP), 110-144 (SESFAVRAIILYGRANMLDRSIQTFRNLEQYEIPR), 145-180 (TVKSLNALLFACLMAKDYKEANRVYLEMPKMYGIEP), 181-215 (DLETYNRMIRVLCESGSTSSSYSIVAEMERKWIKP), 216-250 (TAASFGLMIDGFYKEEKFDEVRKVMRMMDEFGVHV), 251-285 (GVATYNIMIQCLCKRKKSAEAKALIDGVMSCRMRP), 286-320 (NSVTYSLLIHGFCSEENLDEAMNLFEVMVCNGYKP), 321-355 (DSECYFTLIHCLCKGGDFETALILCRESMEKNWVP), and 356-386 (SFSVMKWLVNGLASRSKVDEAKELIAVVKEK).

The protein belongs to the PPR family. P subfamily.

It is found in the mitochondrion. The sequence is that of Pentatricopeptide repeat-containing protein At1g11630, mitochondrial from Arabidopsis thaliana (Mouse-ear cress).